Consider the following 68-residue polypeptide: Putative alpha-conotoxin Qc alphaL-1 (68 aa).

The N-terminal stretch at 1–21 is a signal peptide; it reads MGMRMMFTMFLLVVLATTVVS. A propeptide spanning residues 22–49 is cleaved from the precursor; that stretch reads INLDHAFDGRNAAANNKATDLMARTVRR. Cysteine 51 and cysteine 64 are joined by a disulfide.

It belongs to the conotoxin A superfamily. In terms of tissue distribution, expressed by the venom duct.

Its subcellular location is the secreted. Functionally, alpha-conotoxins act on postsynaptic membranes, they bind to the nicotinic acetylcholine receptors (nAChR) and thus inhibit them. This chain is Putative alpha-conotoxin Qc alphaL-1, found in Conus quercinus (Oak cone).